The sequence spans 132 residues: ATP synthase epsilon chain (132 aa).

It belongs to the ATPase epsilon chain family. As to quaternary structure, F-type ATPases have 2 components, CF(1) - the catalytic core - and CF(0) - the membrane proton channel. CF(1) has five subunits: alpha(3), beta(3), gamma(1), delta(1), epsilon(1). CF(0) has three main subunits: a, b and c.

The protein resides in the cell membrane. Functionally, produces ATP from ADP in the presence of a proton gradient across the membrane. In Desulfitobacterium hafniense (strain DSM 10664 / DCB-2), this protein is ATP synthase epsilon chain.